A 309-amino-acid polypeptide reads, in one-letter code: Taste receptor type 2 member 31 (309 aa).

At 1–2 the chain is on the extracellular side; sequence MI. Residues 3-23 traverse the membrane as a helical segment; that stretch reads TFLPTIFSILVVVIFVIGNFG. Topologically, residues 24–55 are cytoplasmic; sequence NGFIALVNSIEWVKRQKISFADQILTALAVSR. A helical transmembrane segment spans residues 56–76; the sequence is VGLLWALLLNWYSTVFNPAFY. The Extracellular segment spans residues 77 to 100; it reads SVGVRTTVYDVWTVTGHFSNWLAT. Residues 101 to 121 form a helical membrane-spanning segment; the sequence is SLSIFYLLKIANFSNLIFLHL. Topologically, residues 122–126 are cytoplasmic; that stretch reads KRRVK. The helical transmembrane segment at 127–147 threads the bilayer; it reads SVILVMLLGPLLFLACQLFVI. The Extracellular segment spans residues 148-181; it reads NMKEILRTKEYEGNMTWKIKLRSAMYLSDATITT. An N-linked (GlcNAc...) asparagine glycan is attached at Asn161. Residues 182–202 traverse the membrane as a helical segment; the sequence is LANLVPFTLTLLSFLLLICSL. Residues 203–229 are Cytoplasmic-facing; sequence CKHLNKMQLHGKGSQDPSTKVHIKVLQ. Residues 230–250 form a helical membrane-spanning segment; that stretch reads TVISFLLLCAIYFLSIMISVW. At 251-259 the chain is on the extracellular side; it reads SFGSLENKP. A helical transmembrane segment spans residues 260–280; it reads VFMFCKAIRFSYPSIHPFILI. Residues 281–309 lie on the Cytoplasmic side of the membrane; the sequence is WGNKKLKQTFLSVLRQVRYWVKGEKPSSP.

The protein belongs to the G-protein coupled receptor T2R family.

It is found in the membrane. Its function is as follows. Receptor that may play a role in the perception of bitterness and is gustducin-linked. May play a role in sensing the chemical composition of the gastrointestinal content. The activity of this receptor may stimulate alpha gustducin, mediate PLC-beta-2 activation and lead to the gating of TRPM5. In Pongo pygmaeus (Bornean orangutan), this protein is Taste receptor type 2 member 31 (TAS2R31).